The following is a 958-amino-acid chain: Glycine dehydrogenase (decarboxylating) (958 aa).

N6-(pyridoxal phosphate)lysine is present on K703.

It belongs to the GcvP family. The glycine cleavage system is composed of four proteins: P, T, L and H. Pyridoxal 5'-phosphate is required as a cofactor.

The catalysed reaction is N(6)-[(R)-lipoyl]-L-lysyl-[glycine-cleavage complex H protein] + glycine + H(+) = N(6)-[(R)-S(8)-aminomethyldihydrolipoyl]-L-lysyl-[glycine-cleavage complex H protein] + CO2. Functionally, the glycine cleavage system catalyzes the degradation of glycine. The P protein binds the alpha-amino group of glycine through its pyridoxal phosphate cofactor; CO(2) is released and the remaining methylamine moiety is then transferred to the lipoamide cofactor of the H protein. The chain is Glycine dehydrogenase (decarboxylating) from Nitrobacter hamburgensis (strain DSM 10229 / NCIMB 13809 / X14).